The sequence spans 506 residues: Maturase K (506 aa).

The protein belongs to the intron maturase 2 family. MatK subfamily.

It localises to the plastid. The protein localises to the chloroplast. In terms of biological role, usually encoded in the trnK tRNA gene intron. Probably assists in splicing its own and other chloroplast group II introns. This chain is Maturase K, found in Gaultheria procumbens (Wintergreen).